The primary structure comprises 450 residues: Phosphoglucosamine mutase (450 aa).

Ser-101 (phosphoserine intermediate) is an active-site residue. Ser-101, Asp-240, Asp-242, and Asp-244 together coordinate Mg(2+). A Phosphoserine modification is found at Ser-101.

This sequence belongs to the phosphohexose mutase family. Mg(2+) serves as cofactor. Activated by phosphorylation.

The enzyme catalyses alpha-D-glucosamine 1-phosphate = D-glucosamine 6-phosphate. Its function is as follows. Catalyzes the conversion of glucosamine-6-phosphate to glucosamine-1-phosphate. The protein is Phosphoglucosamine mutase of Streptococcus pneumoniae (strain JJA).